The following is a 2434-amino-acid chain: Protein Ycf2 (2434 aa).

1693–1700 (GPTETGRS) is an ATP binding site.

This sequence belongs to the Ycf2 family.

It localises to the plastid. The protein resides in the chloroplast stroma. Its function is as follows. Probable ATPase of unknown function. Its presence in a non-photosynthetic plant (Epifagus virginiana) and experiments in tobacco indicate that it has an essential function which is probably not related to photosynthesis. The protein is Protein Ycf2 of Cycas taitungensis (Prince sago).